The chain runs to 214 residues: C-type lectin domain family 2 member L (214 aa).

Positions 1-56 (MEPAREPPSRARPPPPLAARPAPAPAAPRPRSPAEAEARGPEGLLRRSGSGYEGST) are disordered. Over residues 10–31 (RARPPPPLAARPAPAPAAPRPR) the composition is skewed to pro residues. Serine 32 bears the Phosphoserine mark. Residues 69-89 (LLLGAIAVLLFAILVVMSILA) traverse the membrane as a helical segment. One can recognise a C-type lectin domain in the interval 107-209 (YGRKCYFFSE…CLMTRPWVCS (103 aa)). Disulfide bonds link cysteine 128–cysteine 208 and cysteine 187–cysteine 200.

It localises to the membrane. In Homo sapiens (Human), this protein is C-type lectin domain family 2 member L (CLEC2L).